A 340-amino-acid polypeptide reads, in one-letter code: Protein RecA (340 aa).

65–72 (GPESGGKT) lines the ATP pocket.

This sequence belongs to the RecA family.

The protein resides in the cytoplasm. Can catalyze the hydrolysis of ATP in the presence of single-stranded DNA, the ATP-dependent uptake of single-stranded DNA by duplex DNA, and the ATP-dependent hybridization of homologous single-stranded DNAs. It interacts with LexA causing its activation and leading to its autocatalytic cleavage. The protein is Protein RecA of Thermus aquaticus.